A 451-amino-acid chain; its full sequence is Glycine--tRNA ligase (451 aa).

Substrate is bound by residues arginine 94 and glutamate 164. ATP is bound by residues 196-198 (RNE), 206-211 (FRTREF), 281-282 (EL), and 325-328 (GVER). 211 to 215 (FEQME) serves as a coordination point for substrate. Residue 321–325 (EPSVG) participates in substrate binding.

The protein belongs to the class-II aminoacyl-tRNA synthetase family. Homodimer.

Its subcellular location is the cytoplasm. The enzyme catalyses tRNA(Gly) + glycine + ATP = glycyl-tRNA(Gly) + AMP + diphosphate. Its function is as follows. Catalyzes the attachment of glycine to tRNA(Gly). This Mesoplasma florum (strain ATCC 33453 / NBRC 100688 / NCTC 11704 / L1) (Acholeplasma florum) protein is Glycine--tRNA ligase.